The following is a 318-amino-acid chain: Nuclear egress protein 1 (318 aa).

Residues 129–239 (CLRLSPFGHS…HLLLQGTSLH (111 aa)) form a CCCH-type zinc finger.

Belongs to the herpesviridae NEC1 protein family. Forms a heterodimeric viral nuclear egress complex (NEC) with NEC2. Interacts with capsid vertex specific component 2/CVC2; this interaction directs the capsid to the host inner nuclear membrane to initiate budding. Post-translationally, phosphorylated at serine residues in the N-terminus. This phosphorylation regulates the localization within the inner nuclear membrane.

The protein resides in the host nucleus inner membrane. Functionally, plays an essential role in virion nuclear egress, the first step of virion release from infected cell. Within the host nucleus, NEC1 interacts with the newly formed capsid through the vertexes and directs it to the inner nuclear membrane by associating with NEC2. Induces the budding of the capsid at the inner nuclear membrane as well as its envelopment into the perinuclear space. There, the NEC1/NEC2 complex promotes the fusion of the enveloped capsid with the outer nuclear membrane and the subsequent release of the viral capsid into the cytoplasm where it will reach the secondary budding sites in the host Golgi or trans-Golgi network. This is Nuclear egress protein 1 from Homo sapiens (Human).